The sequence spans 1355 residues: Probable major glycoprotein (1355 aa).

The signal sequence occupies residues 1–16; it reads MKKTMLAIILIPLVYA. N-linked (GlcNAc...) asparagine; by host glycosylation is found at Asn-81, Asn-112, Asn-129, Asn-169, Asn-173, Asn-192, Asn-542, Asn-655, Asn-682, Asn-744, Asn-780, Asn-811, Asn-815, Asn-860, Asn-865, Asn-882, Asn-895, Asn-1213, Asn-1225, Asn-1267, and Asn-1274. Positions 1245-1299 form a coiled coil; it reads QIVSMEMEIQDLKLELIQLQKINTSVHMENITGDIDAMKATIEEYRAEMAKLRVT. The chain crosses the membrane as a helical span at residues 1308–1328; that stretch reads FIYAILGVIAIGALIAIIFMA.

It is found in the host membrane. In Ictaluridae (bullhead catfishes), this protein is Probable major glycoprotein (ORF46).